The chain runs to 251 residues: CDP-diacylglycerol pyrophosphatase (251 aa).

A helical transmembrane segment spans residues 4-24 (AGLLFLVMIVIAVVASGIGYW).

The protein belongs to the Cdh family.

It is found in the cell inner membrane. It carries out the reaction a CDP-1,2-diacyl-sn-glycerol + H2O = a 1,2-diacyl-sn-glycero-3-phosphate + CMP + 2 H(+). Its pathway is phospholipid metabolism; CDP-diacylglycerol degradation; phosphatidate from CDP-diacylglycerol: step 1/1. This is CDP-diacylglycerol pyrophosphatase from Escherichia coli O8 (strain IAI1).